The primary structure comprises 408 residues: Arginine biosynthesis bifunctional protein ArgJ 1 (408 aa).

Substrate is bound by residues T154, K180, T191, E277, N403, and S408. The active-site Nucleophile is the T191.

Belongs to the ArgJ family. As to quaternary structure, heterotetramer of two alpha and two beta chains.

The protein localises to the cytoplasm. The enzyme catalyses N(2)-acetyl-L-ornithine + L-glutamate = N-acetyl-L-glutamate + L-ornithine. It catalyses the reaction L-glutamate + acetyl-CoA = N-acetyl-L-glutamate + CoA + H(+). Its pathway is amino-acid biosynthesis; L-arginine biosynthesis; L-ornithine and N-acetyl-L-glutamate from L-glutamate and N(2)-acetyl-L-ornithine (cyclic): step 1/1. The protein operates within amino-acid biosynthesis; L-arginine biosynthesis; N(2)-acetyl-L-ornithine from L-glutamate: step 1/4. Functionally, catalyzes two activities which are involved in the cyclic version of arginine biosynthesis: the synthesis of N-acetylglutamate from glutamate and acetyl-CoA as the acetyl donor, and of ornithine by transacetylation between N(2)-acetylornithine and glutamate. This Clostridium acetobutylicum (strain ATCC 824 / DSM 792 / JCM 1419 / IAM 19013 / LMG 5710 / NBRC 13948 / NRRL B-527 / VKM B-1787 / 2291 / W) protein is Arginine biosynthesis bifunctional protein ArgJ 1.